The primary structure comprises 322 residues: Tyrosine recombinase XerC (322 aa).

The 91-residue stretch at 14–104 folds into the Core-binding (CB) domain; that stretch reads PDLREAAAAW…ALRSFARHLD (91 aa). One can recognise a Tyr recombinase domain in the interval 125–311; it reads RLPRPLPVAA…DSARLLSAFD (187 aa). Catalysis depends on residues Arg-170, Lys-195, His-263, Arg-266, and His-289. The active-site O-(3'-phospho-DNA)-tyrosine intermediate is the Tyr-298.

The protein belongs to the 'phage' integrase family. XerC subfamily. Forms a cyclic heterotetrameric complex composed of two molecules of XerC and two molecules of XerD.

The protein resides in the cytoplasm. In terms of biological role, site-specific tyrosine recombinase, which acts by catalyzing the cutting and rejoining of the recombining DNA molecules. The XerC-XerD complex is essential to convert dimers of the bacterial chromosome into monomers to permit their segregation at cell division. It also contributes to the segregational stability of plasmids. The polypeptide is Tyrosine recombinase XerC (Methylobacterium nodulans (strain LMG 21967 / CNCM I-2342 / ORS 2060)).